The chain runs to 443 residues: SAM50-like protein CG7639 (443 aa).

The 79-residue stretch at 23-101 (ARVDRVNVSG…QGYEVTFKGN (79 aa)) folds into the POTRA domain.

It belongs to the SAM50/omp85 family. As to quaternary structure, associates with the mitochondrial contact site and cristae organizing system (MICOS) complex (also known as MINOS or MitOS complex).

It localises to the mitochondrion outer membrane. Functionally, may play a role in the maintenance of the structure of mitochondrial cristae. The chain is SAM50-like protein CG7639 from Drosophila melanogaster (Fruit fly).